Consider the following 411-residue polypeptide: Arginine deiminase (411 aa).

C401 acts as the Amidino-cysteine intermediate in catalysis.

The protein belongs to the arginine deiminase family. Glycosylated.

Its subcellular location is the cytoplasm. The enzyme catalyses L-arginine + H2O = L-citrulline + NH4(+). The protein operates within amino-acid degradation; L-arginine degradation via ADI pathway; carbamoyl phosphate from L-arginine: step 1/2. The polypeptide is Arginine deiminase (arcA) (Streptococcus pyogenes serotype M1).